The sequence spans 323 residues: L-lactate dehydrogenase (323 aa).

NAD(+)-binding residues include valine 12, aspartate 33, and tyrosine 65. Residues arginine 94 and 126 to 129 (NPCD) contribute to the substrate site. Position 149 (threonine 149) interacts with NAD(+). 154-157 (ETMR) provides a ligand contact to substrate. Histidine 181 functions as the Proton acceptor in the catalytic mechanism. Threonine 234 lines the substrate pocket.

Belongs to the LDH/MDH superfamily. LDH family. In terms of assembly, homotetramer.

The protein resides in the cytoplasm. The enzyme catalyses (S)-lactate + NAD(+) = pyruvate + NADH + H(+). Its pathway is fermentation; pyruvate fermentation to lactate; (S)-lactate from pyruvate: step 1/1. Catalyzes the conversion of lactate to pyruvate. The chain is L-lactate dehydrogenase from Mycoplasmoides gallisepticum (strain R(low / passage 15 / clone 2)) (Mycoplasma gallisepticum).